Reading from the N-terminus, the 185-residue chain is Ribosome-recycling factor (185 aa).

It belongs to the RRF family.

It is found in the cytoplasm. Its function is as follows. Responsible for the release of ribosomes from messenger RNA at the termination of protein biosynthesis. May increase the efficiency of translation by recycling ribosomes from one round of translation to another. The protein is Ribosome-recycling factor of Finegoldia magna (strain ATCC 29328 / DSM 20472 / WAL 2508) (Peptostreptococcus magnus).